We begin with the raw amino-acid sequence, 379 residues long: Homoserine O-acetyltransferase (379 aa).

Residues 52-356 enclose the AB hydrolase-1 domain; sequence NVVVVLHALT…VYGHDGFLVE (305 aa). Residue serine 157 is the Nucleophile of the active site. Position 227 (arginine 227) interacts with substrate. Residues aspartate 320 and histidine 350 contribute to the active site. Aspartate 351 serves as a coordination point for substrate.

It belongs to the AB hydrolase superfamily. MetX family. In terms of assembly, homodimer.

Its subcellular location is the cytoplasm. The catalysed reaction is L-homoserine + acetyl-CoA = O-acetyl-L-homoserine + CoA. It participates in amino-acid biosynthesis; L-methionine biosynthesis via de novo pathway; O-acetyl-L-homoserine from L-homoserine: step 1/1. Transfers an acetyl group from acetyl-CoA to L-homoserine, forming acetyl-L-homoserine. The protein is Homoserine O-acetyltransferase of Mycobacterium tuberculosis (strain CDC 1551 / Oshkosh).